The chain runs to 453 residues: tRNA modification GTPase MnmE (453 aa).

(6S)-5-formyl-5,6,7,8-tetrahydrofolate contacts are provided by arginine 22, glutamate 79, and lysine 119. Residues glycine 215 to glycine 376 form the TrmE-type G domain. K(+) is bound at residue asparagine 225. Residues asparagine 225 to serine 230, threonine 244 to threonine 250, aspartate 269 to glycine 272, and asparagine 334 to aspartate 337 each bind GTP. Serine 229 serves as a coordination point for Mg(2+). Residues threonine 244, isoleucine 246, and threonine 249 each coordinate K(+). Mg(2+) is bound at residue threonine 250. Lysine 453 is a binding site for (6S)-5-formyl-5,6,7,8-tetrahydrofolate.

The protein belongs to the TRAFAC class TrmE-Era-EngA-EngB-Septin-like GTPase superfamily. TrmE GTPase family. In terms of assembly, homodimer. Heterotetramer of two MnmE and two MnmG subunits. K(+) is required as a cofactor.

The protein resides in the cytoplasm. Exhibits a very high intrinsic GTPase hydrolysis rate. Involved in the addition of a carboxymethylaminomethyl (cmnm) group at the wobble position (U34) of certain tRNAs, forming tRNA-cmnm(5)s(2)U34. In Vibrio cholerae serotype O1 (strain ATCC 39315 / El Tor Inaba N16961), this protein is tRNA modification GTPase MnmE.